The following is a 647-amino-acid chain: 1-deoxy-D-xylulose-5-phosphate synthase (647 aa).

Residues histidine 79 and glycine 120–alanine 122 each bind thiamine diphosphate. Aspartate 152 is a binding site for Mg(2+). Thiamine diphosphate contacts are provided by residues glycine 153 to serine 154, asparagine 181, phenylalanine 293, and glutamate 377. Asparagine 181 is a binding site for Mg(2+).

The protein belongs to the transketolase family. DXPS subfamily. As to quaternary structure, homodimer. Mg(2+) serves as cofactor. It depends on thiamine diphosphate as a cofactor.

The enzyme catalyses D-glyceraldehyde 3-phosphate + pyruvate + H(+) = 1-deoxy-D-xylulose 5-phosphate + CO2. It participates in metabolic intermediate biosynthesis; 1-deoxy-D-xylulose 5-phosphate biosynthesis; 1-deoxy-D-xylulose 5-phosphate from D-glyceraldehyde 3-phosphate and pyruvate: step 1/1. In terms of biological role, catalyzes the acyloin condensation reaction between C atoms 2 and 3 of pyruvate and glyceraldehyde 3-phosphate to yield 1-deoxy-D-xylulose-5-phosphate (DXP). The polypeptide is 1-deoxy-D-xylulose-5-phosphate synthase (Bacteroides thetaiotaomicron (strain ATCC 29148 / DSM 2079 / JCM 5827 / CCUG 10774 / NCTC 10582 / VPI-5482 / E50)).